The primary structure comprises 243 residues: 1-(5-phosphoribosyl)-5-[(5-phosphoribosylamino)methylideneamino] imidazole-4-carboxamide isomerase (243 aa).

The active-site Proton acceptor is D8. D130 (proton donor) is an active-site residue.

The protein belongs to the HisA/HisF family.

It is found in the cytoplasm. The enzyme catalyses 1-(5-phospho-beta-D-ribosyl)-5-[(5-phospho-beta-D-ribosylamino)methylideneamino]imidazole-4-carboxamide = 5-[(5-phospho-1-deoxy-D-ribulos-1-ylimino)methylamino]-1-(5-phospho-beta-D-ribosyl)imidazole-4-carboxamide. It participates in amino-acid biosynthesis; L-histidine biosynthesis; L-histidine from 5-phospho-alpha-D-ribose 1-diphosphate: step 4/9. The chain is 1-(5-phosphoribosyl)-5-[(5-phosphoribosylamino)methylideneamino] imidazole-4-carboxamide isomerase from Acinetobacter baumannii (strain SDF).